The sequence spans 351 residues: UDP-N-acetylglucosamine--N-acetylmuramyl-(pentapeptide) pyrophosphoryl-undecaprenol N-acetylglucosamine transferase (351 aa).

UDP-N-acetyl-alpha-D-glucosamine contacts are provided by residues 13–15 (TGG), Asn125, Arg161, Ser189, Ile241, 260–265 (ALTVCE), and Gln285.

This sequence belongs to the glycosyltransferase 28 family. MurG subfamily.

The protein resides in the cell inner membrane. The catalysed reaction is di-trans,octa-cis-undecaprenyl diphospho-N-acetyl-alpha-D-muramoyl-L-alanyl-D-glutamyl-meso-2,6-diaminopimeloyl-D-alanyl-D-alanine + UDP-N-acetyl-alpha-D-glucosamine = di-trans,octa-cis-undecaprenyl diphospho-[N-acetyl-alpha-D-glucosaminyl-(1-&gt;4)]-N-acetyl-alpha-D-muramoyl-L-alanyl-D-glutamyl-meso-2,6-diaminopimeloyl-D-alanyl-D-alanine + UDP + H(+). The protein operates within cell wall biogenesis; peptidoglycan biosynthesis. Functionally, cell wall formation. Catalyzes the transfer of a GlcNAc subunit on undecaprenyl-pyrophosphoryl-MurNAc-pentapeptide (lipid intermediate I) to form undecaprenyl-pyrophosphoryl-MurNAc-(pentapeptide)GlcNAc (lipid intermediate II). The sequence is that of UDP-N-acetylglucosamine--N-acetylmuramyl-(pentapeptide) pyrophosphoryl-undecaprenol N-acetylglucosamine transferase from Haemophilus influenzae (strain PittEE).